Consider the following 115-residue polypeptide: Ribonuclease P protein component (115 aa).

Belongs to the RnpA family. In terms of assembly, consists of a catalytic RNA component (M1 or rnpB) and a protein subunit.

It catalyses the reaction Endonucleolytic cleavage of RNA, removing 5'-extranucleotides from tRNA precursor.. Functionally, RNaseP catalyzes the removal of the 5'-leader sequence from pre-tRNA to produce the mature 5'-terminus. It can also cleave other RNA substrates such as 4.5S RNA. The protein component plays an auxiliary but essential role in vivo by binding to the 5'-leader sequence and broadening the substrate specificity of the ribozyme. This is Ribonuclease P protein component from Bacillus cereus (strain ATCC 10987 / NRS 248).